The chain runs to 216 residues: Small ribosomal subunit protein uS5 (216 aa).

Residues 51-114 (LEEEVIDVNL…DDAKFNIIKV (64 aa)) enclose the S5 DRBM domain.

This sequence belongs to the universal ribosomal protein uS5 family. As to quaternary structure, part of the 30S ribosomal subunit. Contacts protein S4.

Its function is as follows. With S4 and S12 plays an important role in translational accuracy. The polypeptide is Small ribosomal subunit protein uS5 (Methanothermobacter thermautotrophicus (strain ATCC 29096 / DSM 1053 / JCM 10044 / NBRC 100330 / Delta H) (Methanobacterium thermoautotrophicum)).